Reading from the N-terminus, the 257-residue chain is Transmembrane protein C257L (257 aa).

2 consecutive transmembrane segments (helical) span residues 123 to 143 (LELL…FTAL) and 163 to 183 (MMIF…YVLV).

Belongs to the asfivirus C257R family.

Its subcellular location is the host membrane. It localises to the virion. The chain is Transmembrane protein C257L from African swine fever virus (isolate Tick/South Africa/Pretoriuskop Pr4/1996) (ASFV).